We begin with the raw amino-acid sequence, 362 residues long: D-alanine--D-alanine ligase (362 aa).

The ATP-grasp domain occupies 153–357 (KKIAREAGIP…YADLLTTLVS (205 aa)). Position 180 to 235 (180 to 235 (RELLGLPVFVKPARGGSSIGISKVDSWRDLPAAIEEAASHDPKVIIEAMITGPEVE)) interacts with ATP. The Mg(2+) site is built by aspartate 312, glutamate 324, and asparagine 326.

This sequence belongs to the D-alanine--D-alanine ligase family. The cofactor is Mg(2+). Requires Mn(2+) as cofactor.

The protein localises to the cytoplasm. It catalyses the reaction 2 D-alanine + ATP = D-alanyl-D-alanine + ADP + phosphate + H(+). Its pathway is cell wall biogenesis; peptidoglycan biosynthesis. Its function is as follows. Cell wall formation. In Corynebacterium urealyticum (strain ATCC 43042 / DSM 7109), this protein is D-alanine--D-alanine ligase.